Reading from the N-terminus, the 33-residue chain is Brevinin-2DYa (33 aa).

A disulfide bridge links cysteine 27 with cysteine 33.

As to expression, expressed by the skin glands.

It localises to the secreted. Its function is as follows. Antimicrobial peptide. The polypeptide is Brevinin-2DYa (Rana dybowskii (Dybovsky's frog)).